The sequence spans 266 residues: MQTDNTKSNTNKTAKQEWGSFAFVICIALLIRILIMEPFNVPTGSMKATILENDYIFSTKYSYGYSNYSLSFFDFIPLFKGRIFAREPDRGDIVVFRPPNDMSVRYIKRLIGLPGDKIQLIDDVIYINDKKIERTEVGTYISEEGIKYLKFKETLPNGRTYFSYKLAPIYGVIYNDRYSNTDVFYVPEGQYFFLGDNRDQSNDSRVNLGFVPFENFIAKAQFIWFSTKITWWDNDIGVINLVLKLKPWIESVRLNRIFRNLYNTDA.

Residues 1–20 (MQTDNTKSNTNKTAKQEWGS) are Cytoplasmic-facing. Residues 21–41 (FAFVICIALLIRILIMEPFNV) traverse the membrane as a helical segment. At 42–266 (PTGSMKATIL…IFRNLYNTDA (225 aa)) the chain is on the extracellular side. Active-site residues include S45 and K108.

It belongs to the peptidase S26 family.

The protein localises to the cell membrane. The catalysed reaction is Cleavage of hydrophobic, N-terminal signal or leader sequences from secreted and periplasmic proteins.. The protein is Signal peptidase I (lepB) of Rickettsia conorii (strain ATCC VR-613 / Malish 7).